The primary structure comprises 1012 residues: MVSKMIIENFEALKSWLSKTLEPICDADPSALAKYVLALVKKDKSEKELKALCIDQLDVFLQKETQIFVEKLFDAVNTKSYLPPPEQPSSGSLKVDFLQHQEKDIKKEELTKEEEREKKFSRRLNHSPPQSSSRYRDNRSRDERKKDDRSRKRDYDRNPPRRDSYRDRYNRRRGRSRSYSRSRSRSWSKERLRDRDRDRSRTRSRSRTRSRERDLVKPKYDLDRTDPLENNYTPVSSVSNISSGHYPVPTLSSTITVIAPTHHGNNTTESWSEFHEDQVDHNSYVRPPMPKKRCRDYDEKGFCMRGDMCPFDHGSDPVVVEDVNLPGMLPFPAQPPVVEGPPPPGLPPPPPILTPPPVNLRPPVPPPGPLPPSLPPVTGPPPPLPPLQPSGMDAPPNSATSSVPTVVTTGIHHQPPPAPPSLFTAVFVLPDTYDTDGYNPEAPSITNTSRPMYRHRVHAQRPNLIGLTSGDMDLPPREKPPNKSSMRIVVDSESRKRTIGSGEPGVSTKKTWFDKPNFNRTNSPGFQKKVQFGNENTKLELRKVPPELNNISKLNEHFSRFGTLVNLQVAYNGDPEGALIQFATYEEAKKAISSTEAVLNNRFIKVYWHREGTTQQLQTTSPKVIQPLVQQPILPVVKQSVKERLGPVPSATTEPAEAQSATSELPQNVTKLSVKDRLGFVSKPSVSATEKVLSTSTGLTKTVYNPAALKAAQKTLSVSTPAVDNNEAQKKKQEALKLQQDVRKRKQEILEKHIETQKMLISKLEKNKTMKSEDKAEIMKTLEILTKNITKLKDEVKSTSPGRCLPKSIKTKTQMQKELLDTELDLYKKMQAGEEVTELRRKYTELQLEAAKRGILSSGRGRGIHTRGRGTAHGRGRGRGRGRGVPGHAVVDHRPRALEISAFTESDREDLLPHFAQYGEIEDCQIDDASLHAIITFKTRAEAEAAAIHGARFKGQDLKLAWNKPIANMSAVDTEEAEPDEEEFQEESLVDDSLLQDDDEEEEDNESRSWRR.

Lysine 94 is covalently cross-linked (Glycyl lysine isopeptide (Lys-Gly) (interchain with G-Cter in SUMO2)). Positions 98-127 form a coiled coil; the sequence is LQHQEKDIKKEELTKEEEREKKFSRRLNHS. Lysine 106 participates in a covalent cross-link: Glycyl lysine isopeptide (Lys-Gly) (interchain with G-Cter in SUMO1); alternate. A Glycyl lysine isopeptide (Lys-Gly) (interchain with G-Cter in SUMO2); alternate cross-link involves residue lysine 106. Basic and acidic residues predominate over residues 106-118; that stretch reads KKEELTKEEEREK. The tract at residues 106–236 is disordered; sequence KKEELTKEEE…PLENNYTPVS (131 aa). Serine 127 bears the Phosphoserine mark. The span at 134–168 shows a compositional bias: basic and acidic residues; the sequence is RYRDNRSRDERKKDDRSRKRDYDRNPPRRDSYRDR. The span at 169–186 shows a compositional bias: basic residues; the sequence is YNRRRGRSRSYSRSRSRS. 2 stretches are compositionally biased toward basic and acidic residues: residues 187–201 and 209–227; these read WSKERLRDRDRDRSR and RSRERDLVKPKYDLDRTDP. Residues 288–316 form a C3H1-type zinc finger; it reads PMPKKRCRDYDEKGFCMRGDMCPFDHGSD. Residues 334 to 388 show a composition bias toward pro residues; sequence QPPVVEGPPPPGLPPPPPILTPPPVNLRPPVPPPGPLPPSLPPVTGPPPPLPPLQ. Disordered regions lie at residues 334-404 and 465-520; these read QPPV…SSVP and IGLT…NFNR. Positions 394–404 are enriched in low complexity; the sequence is APPNSATSSVP. A Phosphoserine modification is found at serine 501. The residue at position 515 (lysine 515) is an N6-acetyllysine. The residue at position 523 (serine 523) is a Phosphoserine. An RRM 1 domain is found at 537–611; sequence TKLELRKVPP…RFIKVYWHRE (75 aa). At serine 621 the chain carries Phosphoserine. The tract at residues 647 to 667 is disordered; sequence PVPSATTEPAEAQSATSELPQ. 2 coiled-coil regions span residues 724 to 800 and 828 to 852; these read DNNE…KSTS and KKMQAGEEVTELRRKYTELQLEAAK. The disordered stretch occupies residues 858–889; sequence SGRGRGIHTRGRGTAHGRGRGRGRGRGVPGHA. Positions 862-882 are enriched in basic residues; sequence RGIHTRGRGTAHGRGRGRGRG. Residues 896-965 form the RRM 2 domain; it reads RALEISAFTE…QDLKLAWNKP (70 aa). The interval 970–1012 is disordered; it reads SAVDTEEAEPDEEEFQEESLVDDSLLQDDDEEEEDNESRSWRR. Positions 973 to 1005 are enriched in acidic residues; it reads DTEEAEPDEEEFQEESLVDDSLLQDDDEEEEDN.

Expressed in testis and ovary.

May be involved in the turnover of nuclear polyadenylated (pA+) RNA. The protein is RNA-binding protein 26 of Mus musculus (Mouse).